Reading from the N-terminus, the 100-residue chain is Small ribosomal subunit protein uS14c (100 aa).

This sequence belongs to the universal ribosomal protein uS14 family. As to quaternary structure, part of the 30S ribosomal subunit.

The protein localises to the plastid. It is found in the chloroplast. In terms of biological role, binds 16S rRNA, required for the assembly of 30S particles. In Ceratophyllum demersum (Rigid hornwort), this protein is Small ribosomal subunit protein uS14c.